We begin with the raw amino-acid sequence, 417 residues long: Mitochondrial tRNA-specific 2-thiouridylase 1 (417 aa).

ATP-binding positions include 32 to 39 (AMSSGVDS) and methionine 58. The interval 122 to 124 (NPD) is interaction with target base in tRNA. Cysteine 127 acts as the Nucleophile in catalysis. Cysteine 127 and cysteine 229 are disulfide-bonded. Glycine 154 provides a ligand contact to ATP. Residues 179-181 (KDQ) are interaction with tRNA. Residue cysteine 229 is the Cysteine persulfide intermediate of the active site. The interval 354–355 (RS) is interaction with tRNA.

This sequence belongs to the MnmA/TRMU family.

The protein resides in the mitochondrion. It catalyses the reaction 5-taurinomethyluridine(34) in tRNA + S-sulfanyl-L-cysteinyl-[protein] + AH2 + ATP = 5-taurinomethyl-2-thiouridine(34) in tRNA + L-cysteinyl-[protein] + A + AMP + diphosphate + H(+). Catalyzes the 2-thiolation of uridine at the wobble position (U34) of mitochondrial tRNA(Lys), tRNA(Glu) and tRNA(Gln). Required for the formation of 5-taurinomethyl-2-thiouridine (tm5s2U) of mitochondrial tRNA(Lys), tRNA(Glu), and tRNA(Gln) at the wobble position. ATP is required to activate the C2 atom of the wobble base. The protein is Mitochondrial tRNA-specific 2-thiouridylase 1 (SLM3) of Saccharomyces cerevisiae (strain ATCC 204508 / S288c) (Baker's yeast).